The primary structure comprises 443 residues: Protein Z-dependent protease inhibitor (443 aa).

The first 23 residues, 1 to 23 (MKVVPSLLLSVLLAQVWLVPGLA), serve as a signal peptide directing secretion. Residues 24–66 (PSPQSPETPAPQNQTSRVVQAPREEEEDEQEASEEKAGDEEKA) are disordered. An N-linked (GlcNAc...) asparagine glycan is attached at Asn36. Ser56 is modified (phosphoserine). The span at 56–66 (SEEKAGDEEKA) shows a compositional bias: basic and acidic residues. The segment at 136–153 (TKPGLLPSLFKGLRETLS) is heparin-binding. N-linked (GlcNAc...) asparagine glycans are attached at residues Asn180 and Asn295.

Belongs to the serpin family. Post-translationally, phosphorylated by FAM20C in the extracellular medium.

Its subcellular location is the secreted. Functionally, inhibits activity of the coagulation protease factor Xa in the presence of PROZ, calcium and phospholipids. Also inhibits factor XIa in the absence of cofactors. This chain is Protein Z-dependent protease inhibitor (SERPINA10), found in Pongo abelii (Sumatran orangutan).